Here is a 106-residue protein sequence, read N- to C-terminus: ATP-dependent Clp protease adapter protein ClpS (106 aa).

This sequence belongs to the ClpS family. As to quaternary structure, binds to the N-terminal domain of the chaperone ClpA.

Functionally, involved in the modulation of the specificity of the ClpAP-mediated ATP-dependent protein degradation. The chain is ATP-dependent Clp protease adapter protein ClpS from Aliivibrio fischeri (strain ATCC 700601 / ES114) (Vibrio fischeri).